The following is a 298-amino-acid chain: uncharacterized protein (298 aa).

Helical transmembrane passes span 5–25 (SLAT…FLLW), 52–72 (VISG…FLAL), 105–125 (LFLL…QVLV), 138–158 (IFWG…LLML), 163–183 (IQGG…NDIA), 208–228 (GLMG…PLLT), 236–256 (LLAG…MSAI), and 273–293 (GGLL…FYFI).

It belongs to the CDS family.

Its subcellular location is the cell membrane. This is an uncharacterized protein from Escherichia coli (strain K12).